The sequence spans 320 residues: o-succinylbenzoate synthase (320 aa).

Lys-133 (proton donor) is an active-site residue. Asp-161, Glu-190, and Asp-213 together coordinate Mg(2+). The active-site Proton acceptor is Lys-235.

This sequence belongs to the mandelate racemase/muconate lactonizing enzyme family. MenC type 1 subfamily. Requires a divalent metal cation as cofactor.

The enzyme catalyses (1R,6R)-6-hydroxy-2-succinyl-cyclohexa-2,4-diene-1-carboxylate = 2-succinylbenzoate + H2O. It functions in the pathway quinol/quinone metabolism; 1,4-dihydroxy-2-naphthoate biosynthesis; 1,4-dihydroxy-2-naphthoate from chorismate: step 4/7. The protein operates within quinol/quinone metabolism; menaquinone biosynthesis. Converts 2-succinyl-6-hydroxy-2,4-cyclohexadiene-1-carboxylate (SHCHC) to 2-succinylbenzoate (OSB). In Salmonella agona (strain SL483), this protein is o-succinylbenzoate synthase.